Consider the following 414-residue polypeptide: Myb1 protein (414 aa).

Myb-like domains are found at residues 242 to 266, 268 to 320, and 328 to 381; these read WNEV…LYYG, FEDD…IKIN, and KVKL…TNLN.

The protein localises to the nucleus. Its function is as follows. Transcriptional activator. Has a role in the parasite erythrocytic cycle where it directly regulates key genes involved in cell cycle regulation and progression. Binds directly to Myb regulatory elements. The polypeptide is Myb1 protein (Plasmodium falciparum (isolate 3D7)).